The primary structure comprises 425 residues: Elongation factor 1-alpha (425 aa).

The region spanning 5 to 221 is the tr-type G domain; the sequence is KPHMNLAVIG…DTFKEPSKPT (217 aa). Positions 14–21 are G1; sequence GHIDHGKS. 14–21 serves as a coordination point for GTP; that stretch reads GHIDHGKS. Mg(2+) is bound at residue serine 21. The G2 stretch occupies residues 70-74; that stretch reads GITID. The interval 91-94 is G3; sequence DCPG. GTP contacts are provided by residues 91–95 and 146–149; these read DCPGH and NKMD. The G4 stretch occupies residues 146–149; that stretch reads NKMD. A G5 region spans residues 185–187; it reads SSL.

Belongs to the TRAFAC class translation factor GTPase superfamily. Classic translation factor GTPase family. EF-Tu/EF-1A subfamily.

The protein resides in the cytoplasm. The enzyme catalyses GTP + H2O = GDP + phosphate + H(+). Its function is as follows. GTP hydrolase that promotes the GTP-dependent binding of aminoacyl-tRNA to the A-site of ribosomes during protein biosynthesis. The polypeptide is Elongation factor 1-alpha (Methanoregula boonei (strain DSM 21154 / JCM 14090 / 6A8)).